A 180-amino-acid chain; its full sequence is Large ribosomal subunit protein eL20 (180 aa).

Belongs to the eukaryotic ribosomal protein eL20 family.

This is Large ribosomal subunit protein eL20 from Caenorhabditis elegans.